Here is a 182-residue protein sequence, read N- to C-terminus: Protein Syd (182 aa).

It belongs to the Syd family.

It localises to the cell inner membrane. Interacts with the SecY protein in vivo. May bind preferentially to an uncomplexed state of SecY, thus functioning either as a chelating agent for excess SecY in the cell or as a regulatory factor that negatively controls the translocase function. This Pectobacterium atrosepticum (strain SCRI 1043 / ATCC BAA-672) (Erwinia carotovora subsp. atroseptica) protein is Protein Syd.